Consider the following 257-residue polypeptide: 5'-nucleotidase SurE (257 aa).

Asp15, Asp16, Ser46, and Asn99 together coordinate a divalent metal cation.

Belongs to the SurE nucleotidase family. The cofactor is a divalent metal cation.

The protein resides in the cytoplasm. The catalysed reaction is a ribonucleoside 5'-phosphate + H2O = a ribonucleoside + phosphate. In terms of biological role, nucleotidase that shows phosphatase activity on nucleoside 5'-monophosphates. In Aliivibrio fischeri (strain ATCC 700601 / ES114) (Vibrio fischeri), this protein is 5'-nucleotidase SurE.